Consider the following 547-residue polypeptide: Dihydrolipoyllysine-residue acetyltransferase component of pyruvate dehydrogenase complex (547 aa).

In terms of domain architecture, Lipoyl-binding 1 spans 2 to 75 (SELIRVPDIG…KEGDEILELE (74 aa)). K41 carries the post-translational modification N6-lipoyllysine. The tract at residues 75–117 (EVEGGEQPAEAKAEAAPAQPEAPKAEAPAPAPSESKPAAPAAA) is disordered. The segment covering 80 to 117 (EQPAEAKAEAAPAQPEAPKAEAPAPAPSESKPAAPAAA) has biased composition (low complexity). The Lipoyl-binding 2 domain maps to 119-193 (VQDIKVPDIG…GTGDLILKLK (75 aa)). At K159 the chain carries N6-lipoyllysine. The segment covering 202 to 231 (EEQPAAAPAQAAAPAAEQKPAAAAPAPAKA) has biased composition (low complexity). A disordered region spans residues 202-248 (EEQPAAAPAQAAAPAAEQKPAAAAPAPAKADTPAPVGAPSRDGAKVH). The region spanning 248-285 (HAGPAVRMLAREFGVELSEVKASGPKGRILKEDVQVFV) is the Peripheral subunit-binding (PSBD) domain. H520 is an active-site residue.

This sequence belongs to the 2-oxoacid dehydrogenase family. As to quaternary structure, forms a 24-polypeptide structural core with octahedral symmetry. It depends on (R)-lipoate as a cofactor.

It catalyses the reaction N(6)-[(R)-dihydrolipoyl]-L-lysyl-[protein] + acetyl-CoA = N(6)-[(R)-S(8)-acetyldihydrolipoyl]-L-lysyl-[protein] + CoA. In terms of biological role, the pyruvate dehydrogenase complex catalyzes the overall conversion of pyruvate to acetyl-CoA and CO(2). It contains multiple copies of three enzymatic components: pyruvate dehydrogenase (E1), dihydrolipoamide acetyltransferase (E2) and lipoamide dehydrogenase (E3). This is Dihydrolipoyllysine-residue acetyltransferase component of pyruvate dehydrogenase complex (aceF) from Pseudomonas aeruginosa (strain ATCC 15692 / DSM 22644 / CIP 104116 / JCM 14847 / LMG 12228 / 1C / PRS 101 / PAO1).